A 227-amino-acid polypeptide reads, in one-letter code: PKHD-type hydroxylase Swit_4046 (227 aa).

The Fe2OG dioxygenase domain maps to 78–178 (KVFPPLFNLY…RLCSFFWIQS (101 aa)). Fe cation-binding residues include H96, D98, and H159. Residue R169 participates in 2-oxoglutarate binding.

The cofactor is Fe(2+). It depends on L-ascorbate as a cofactor.

This chain is PKHD-type hydroxylase Swit_4046, found in Rhizorhabdus wittichii (strain DSM 6014 / CCUG 31198 / JCM 15750 / NBRC 105917 / EY 4224 / RW1) (Sphingomonas wittichii).